A 506-amino-acid polypeptide reads, in one-letter code: MLKPLWKAAVAPTWPCSMPPRRPWDREAGTLQVLGALAVLWLGSVALICLLWQVPRPPTWGQVQPKDVPRSWEHGSSPAWEPLEAEARQQRDSCQLVLVESIPQDLPSAAGSPSAQPLGQAWLQLLDTAQESVHVASYYWSLTGPDIGVNDSSSQLGEALLQKLQQLLGRNISLAVATSSPTLARTSTDLQVLAARGAHVRQVPMGRLTRGVLHSKFWVVDGRHIYMGSANMDWRSLTQVKELGAVIYNCSHLAQDLEKTFQTYWVLGVPKAVLPKTWPQNFSSHFNRFQPFHGLFDGVPTTAYFSASPPALCPQGRTRDLEALLAVMGSAQEFIYASVMEYFPTTRFSHPPRYWPVLDNALRAAAFGKGVRVRLLVGCGLNTDPTMFPYLRSLQALSNPAANVSVDVKVFIVPVGNHSNIPFSRVNHSKFMVTEKAAYIGTSNWSEDYFSSTAGVGLVVTQSPGAQPAGATVQEQLRQLFERDWSSRYAVGLDGQAPGQDCVWQG.

A helical membrane pass occupies residues 31–51; it reads LQVLGALAVLWLGSVALICLL. C94 and C250 are oxidised to a cystine. Residues N150 and N171 are each glycosylated (N-linked (GlcNAc...) asparagine). A PLD phosphodiesterase 1 domain is found at 209–236; sequence TRGVLHSKFWVVDGRHIYMGSANMDWRS. The Proton donor role is filled by H214. Residues K216 and D221 contribute to the active site. 5 N-linked (GlcNAc...) asparagine glycosylation sites follow: N249, N281, N403, N417, and N427. C379 and C502 are oxidised to a cystine. One can recognise a PLD phosphodiesterase 2 domain in the interval 423 to 449; it reads FSRVNHSKFMVTEKAAYIGTSNWSEDY. Residue H428 is the Nucleophile of the active site. N-linked (GlcNAc...) asparagine glycosylation occurs at N444.

Belongs to the phospholipase D family. Homodimer. Post-translationally, highly N-glycosylated. Expressed in plasmacytoid dendritic cells and monocytes (at protein level).

It localises to the endoplasmic reticulum membrane. Its subcellular location is the golgi apparatus. The protein resides in the trans-Golgi network membrane. The protein localises to the nucleus. It is found in the early endosome. It localises to the cytoplasmic vesicle. Its subcellular location is the phagosome. The protein resides in the lysosome. It carries out the reaction Exonucleolytic cleavage in the 5'- to 3'-direction to yield nucleoside 3'-phosphates.. It catalyses the reaction a 5'-end 5'-dephospho-ribonucleotidyl-ribonucleotide-RNA + H2O = a ribonucleoside 3'-phosphate + a 5'-end dephospho-ribonucleoside-RNA + H(+). The catalysed reaction is a ribonucleoside 3'-phosphate-2'-3'-cyclophospho-GMP + H2O = a ribonucleoside 3'-phosphate + 2',3'-cyclophospho-GMP + H(+). The enzyme catalyses a 5'-end 5'-dephospho-2'-deoxyribonucleotidyl-2'-deoxyribonucleotide in single-stranded DNA + H2O = a 5'-end dephospho-2'-deoxyribonucleoside in single-stranded DNA + a 2'-deoxyribonucleoside 3'-phosphate + H(+). It carries out the reaction a 5'-end 5'-phospho-2'-deoxyribonucleotide in single-stranded DNA + H2O = a 5'-end 5'-dephospho-2'-deoxyribonucleotide in single-stranded DNA + phosphate. It catalyses the reaction a 3-lyso-sn-glycero-1-phospho-(3'-acyl-1'-sn-glycerol) + a 1-acyl-sn-glycerol = a 3-acyl-sn-glycero-1-phospho-(3'-acyl-1'-sn-glycerol) + glycerol. The catalysed reaction is 3-lyso-sn-glycero-1-phospho-(3'-(9Z-octadecenoyl)-1'-sn-glycerol) + 1-(9Z-octadecenoyl)-sn-glycerol = 3-(9Z-octadecenoyl)-sn-glycero-1-phospho-(3'-(9Z-octadecenoyl)-1'-sn-glycerol) + glycerol. With respect to regulation, the exonuclease activity toward ssDNA substrate is Ca(2+) and Mg(2+)-independent, but it is inhibited by Fe(2+), Cu(2+) and to a lesser extent Zn(2+) ions. In terms of biological role, 5'-&gt;3' exonuclease that hydrolyzes the phosphodiester bond of single-stranded DNA (ssDNA) and RNA molecules to form nucleoside 3'-monophosphates and 5'-end 5'-hydroxy deoxyribonucleotide/ribonucleotide fragments. Partially redundant with PLD3, can cleave all four nucleotides displaying higher efficiency for ssDNA and RNA fragments initiated with uridine and guanosine residues and lower efficiency for cytidine-initiated substrates. As a result, it does not always degrade polynucleotides to the single nucleotide level, it can stall at specific sites sparing certain fragments from exonucleolytic degradation. Processes self and pathogenic ssDNA and RNA molecules that reach the endolysosomal compartment via phagocytosis or autophagy and may serve as 'danger' signals for recognition by innate immune receptors such as toll-like receptors (TLRs). Degrades mitochondrial CpG-rich ssDNA fragments to prevent TLR9 activation and autoinflammatory response, but it can cleave viral RNA to generate ligands for TLR7 activation and initiate antiviral immune responses. In plasmacytoid dendritic cells, it cooperates with endonuclease RNASET2 to release 2',3'-cyclic guanosine monophosphate (2',3'-cGMP), a potent stimulatory ligand for TLR7. Produces 2',3'-cGMPs and cytidine-rich RNA fragments that occupy TLR7 ligand-binding pockets and trigger a signaling-competent state. Can exert polynucleotide phosphatase activity toward 5'-phosphorylated ssDNA substrates although at a slow rate. Transphosphatidylase that catalyzes the exchange with R to S stereo-inversion of the glycerol moiety between (S,R)-lysophosphatidylglycerol (LPG) and monoacylglycerol (MAG) substrates to yield (S,S)-bis(monoacylglycero)phosphate (BMP). Can synthesize a variety of (S,S)-BMPs representing the main phospholipid constituent of lysosomal intralumenal vesicle (ILV) membranes that bind acid hydrolases for lipid degradation. Regulates the homeostasis and interorganellar communication of the endolysosomal system with an overall impact on cellular removal of dysfunctional organelles via autophagy as well as proper protein and lipid turnover. May play a role in myotube formation in response to ER stress. This is 5'-3' exonuclease PLD4 from Homo sapiens (Human).